The chain runs to 383 residues: S-adenosylmethionine synthase (383 aa).

Residue His-22 coordinates ATP. Residue Asp-24 coordinates Mg(2+). Glu-50 contacts K(+). Residues Glu-63 and Gln-99 each coordinate L-methionine. Positions Gln-99–Ser-109 are flexible loop. Residues Asp-160–Lys-162, Asp-235, Arg-241–Lys-242, Ser-258, and Lys-262 contribute to the ATP site. Residue Asp-235 coordinates L-methionine. Lys-266 lines the L-methionine pocket.

The protein belongs to the AdoMet synthase family. Homotetramer; dimer of dimers. Mg(2+) serves as cofactor. The cofactor is K(+).

The protein localises to the cytoplasm. It catalyses the reaction L-methionine + ATP + H2O = S-adenosyl-L-methionine + phosphate + diphosphate. The protein operates within amino-acid biosynthesis; S-adenosyl-L-methionine biosynthesis; S-adenosyl-L-methionine from L-methionine: step 1/1. In terms of biological role, catalyzes the formation of S-adenosylmethionine (AdoMet) from methionine and ATP. The overall synthetic reaction is composed of two sequential steps, AdoMet formation and the subsequent tripolyphosphate hydrolysis which occurs prior to release of AdoMet from the enzyme. The sequence is that of S-adenosylmethionine synthase from Mycoplasma pneumoniae (strain ATCC 29342 / M129 / Subtype 1) (Mycoplasmoides pneumoniae).